Reading from the N-terminus, the 345-residue chain is GDP-mannose transporter (345 aa).

Over Met-1 to Arg-8 the chain is Cytoplasmic. Residues Ile-9–Leu-29 traverse the membrane as a helical segment. The Lumenal portion of the chain corresponds to Thr-30–Tyr-40. Residues Asn-41–Leu-61 form a helical membrane-spanning segment. At Lys-62 to Lys-78 the chain is on the cytoplasmic side. The helical transmembrane segment at Phe-79–Leu-101 threads the bilayer. Residues Ser-102 to Pro-104 lie on the Lumenal side of the membrane. Residues Val-105–Gly-127 traverse the membrane as a helical segment. The Cytoplasmic portion of the chain corresponds to His-128–Ala-131. A helical membrane pass occupies residues Leu-132–Ala-150. Over Asp-151–Thr-161 the chain is Lumenal. The chain crosses the membrane as a helical span at residues Leu-162–Ala-182. Residues Met-183–Asp-194 are Cytoplasmic-facing. Residues Phe-195–Phe-215 traverse the membrane as a helical segment. Over Thr-216–Lys-233 the chain is Lumenal. The helical transmembrane segment at Phe-234–Ser-254 threads the bilayer. Residues Ala-255–Thr-264 lie on the Cytoplasmic side of the membrane. The helical transmembrane segment at Thr-265–Phe-285 threads the bilayer. At Asp-286–Pro-288 the chain is on the lumenal side. The chain crosses the membrane as a helical span at residues Ile-289–Val-309. Residues Ala-310–Ser-345 lie on the Cytoplasmic side of the membrane. The disordered stretch occupies residues Asp-319–Ser-345. A compositionally biased stretch (polar residues) spans Asn-329 to Ser-345.

This sequence belongs to the TPT transporter family. SLC35D subfamily. In terms of assembly, homooligomer.

The protein localises to the golgi apparatus membrane. The protein resides in the cytoplasmic vesicle membrane. Its subcellular location is the endoplasmic reticulum membrane. In terms of biological role, involved in the import of GDP-mannose from the cytoplasm into the Golgi lumen. This is GDP-mannose transporter (vrg4) from Schizosaccharomyces pombe (strain 972 / ATCC 24843) (Fission yeast).